The chain runs to 538 residues: MVRLATFNDNVQVVHIGHLFRNSGHKEWRIFVWFNPMQERKWTRFTHLPLLSRAKVVNSTTKQINKADRVIEFEASDLQRAKIIDFPNLSSFASVRNKDGAQSSFIYEAETPYSKTRYHIPQLELARSLFLINSYFCRSCLSSTALQQEFDVQYEVERDHLEIRILPSSSFPKGALEQSAVVQLLVWLFSDQDVMDSYESIFRHYQQNREIKNGVESWCFSFDPPPMQGWKLHVKGRSSNEDKDYLVEEIVGLEINAMLPSTTAISHASFQEKEAGDGSTQHIAVSTESVVDDEHLQLDDEETANIDTDTRVIEAEPTWISFSRPSRIEKSRRARKSSQTILEKEEATTSENSNLVSTDEPHLGGVLAAADVGGKQDATNYNSIFANRFAAFDELLSILKTKFACRVLFEETLVLPKVGRSRLHLCKDGSPRVIKAVGVQRNGSEFVLLEVDASDGVKMLSTKVLSGVDSETWRNDFEKIRRGVVKSSLNWPNSLFDQLYGQDGHRGVNHPKGLGELQVSREDMEGWAERVVREQFTH.

Positions 311–330 (RVIEAEPTWISFSRPSRIEK) form a DNA-binding region, H-T-H motif. A disordered region spans residues 330–360 (KSRRARKSSQTILEKEEATTSENSNLVSTDE).

In terms of biological role, tnsABC + TnsD promote high-frequency insertion of Tn7 into a specific target site known as att-Tn7 whereas TnsABC + TnsE promote low-frequency insertion into many different sites. The protein is Transposon Tn7 transposition protein TnsE (tnsE) of Escherichia coli.